A 264-amino-acid polypeptide reads, in one-letter code: Tryptophan synthase alpha chain (264 aa).

Catalysis depends on proton acceptor residues Glu49 and Asp60.

It belongs to the TrpA family. Tetramer of two alpha and two beta chains.

It carries out the reaction (1S,2R)-1-C-(indol-3-yl)glycerol 3-phosphate + L-serine = D-glyceraldehyde 3-phosphate + L-tryptophan + H2O. The protein operates within amino-acid biosynthesis; L-tryptophan biosynthesis; L-tryptophan from chorismate: step 5/5. The alpha subunit is responsible for the aldol cleavage of indoleglycerol phosphate to indole and glyceraldehyde 3-phosphate. The chain is Tryptophan synthase alpha chain from Microcystis aeruginosa (strain NIES-843 / IAM M-2473).